The sequence spans 215 residues: MINLALVIFLCTLLNQIVSWVGKSVLQEIAFTAYSWVFLSGTAAKQRKLRKQVLEDKAELGRTSSQDEFAKWAKLRRKLDKGLADLEKTNNTLSSSRSSFSKKFSTLLWLMTTGAQFLLSWWFRKQPIFWLPEGWVPYPVAWLLSFPSAPIGSVSSGAWGAICRRVLSTLQEIIQSVLAPSPAATGPVPTGPSSAKNDQPEAKIEALALEHEKLD.

Residues 1 to 4 are Lumenal-facing; it reads MINL. A helical membrane pass occupies residues 5–24; sequence ALVIFLCTLLNQIVSWVGKS. The Cytoplasmic portion of the chain corresponds to 25 to 108; that stretch reads VLQEIAFTAY…SFSKKFSTLL (84 aa). Residues 73-94 adopt a coiled-coil conformation; sequence AKLRRKLDKGLADLEKTNNTLS. Residues 109–129 traverse the membrane as a helical segment; it reads WLMTTGAQFLLSWWFRKQPIF. Residues 130 to 153 lie on the Lumenal side of the membrane; it reads WLPEGWVPYPVAWLLSFPSAPIGS. A helical transmembrane segment spans residues 154-170; it reads VSSGAWGAICRRVLSTL. The Cytoplasmic segment spans residues 171–215; the sequence is QEIIQSVLAPSPAATGPVPTGPSSAKNDQPEAKIEALALEHEKLD. The tract at residues 181 to 202 is disordered; that stretch reads SPAATGPVPTGPSSAKNDQPEA.

Belongs to the WRB/GET1 family. Interacts with GET3.

The protein resides in the endoplasmic reticulum membrane. Its function is as follows. Required for the post-translational delivery of tail-anchored (TA) proteins to the endoplasmic reticulum. Acts as a membrane receptor for soluble GET3, which recognizes and selectively binds the transmembrane domain of TA proteins in the cytosol. The chain is Protein GET1 from Cryptococcus neoformans var. neoformans serotype D (strain B-3501A) (Filobasidiella neoformans).